A 142-amino-acid polypeptide reads, in one-letter code: Hemoglobin subunit alpha (142 aa).

The 141-residue stretch at 2–142 folds into the Globin domain; the sequence is VLSSQNKKAI…VAYELSSCYR (141 aa). H60 contacts O2. H89 contacts heme b.

Belongs to the globin family. Heterotetramer of two alpha chains and two beta chains. Red blood cells.

Functionally, involved in oxygen transport from gills to the various peripheral tissues. The chain is Hemoglobin subunit alpha (hba) from Hemitrygon akajei (Red stingray).